The primary structure comprises 436 residues: MLADEVLELLSAEISPNEYEYYIKQLKFNEKASSDETVVFNAPNELIAKFIKTKYATKIAHLFEVKTGTKPNVEITTQTKLKSSKQNQVNIKQIKAQSTLLNPAYTFENFVVGGSNEYAFLSAKAASEQPGKIYNPLFIYGPTGLGKTHLLQSVGNFCLNQGKVVICVTSEQFMTDFTYNINNHSMERFREKYRNCDVLLIDDVQFLGKTDKIQEEFFHTFNELHSKNGQIVMTSDRQPKLLKGFEDRLRTRFEWGIMADITPPELDTKIAIIQKKCEFDKIYLNKDVINYIATNMGDNIREIESAIINLNAYANLMRQEITLDFAKNVMRDLIKEKRENINLENIIEVVSKELNIKPSDIKSKSRVQNIVEARRIVIYLAKMLTTNSMPQIANYFSMKDHSAVSHNIKKINELIENNEIFNLRVSELKNKILTKG.

Residues 1–69 (MLADEVLELL…AHLFEVKTGT (69 aa)) are domain I, interacts with DnaA modulators. The tract at residues 69–99 (TKPNVEITTQTKLKSSKQNQVNIKQIKAQST) is domain II. A domain III, AAA+ region region spans residues 100–314 (LLNPAYTFEN…SAIINLNAYA (215 aa)). Residues Gly144, Gly146, Lys147, and Thr148 each coordinate ATP. Positions 315–436 (NLMRQEITLD…ELKNKILTKG (122 aa)) are domain IV, binds dsDNA.

It belongs to the DnaA family. Oligomerizes as a right-handed, spiral filament on DNA at oriC.

It localises to the cytoplasm. Plays an essential role in the initiation and regulation of chromosomal replication. ATP-DnaA binds to the origin of replication (oriC) to initiate formation of the DNA replication initiation complex once per cell cycle. Binds the DnaA box (a 9 base pair repeat at the origin) and separates the double-stranded (ds)DNA. Forms a right-handed helical filament on oriC DNA; dsDNA binds to the exterior of the filament while single-stranded (ss)DNA is stabiized in the filament's interior. The ATP-DnaA-oriC complex binds and stabilizes one strand of the AT-rich DNA unwinding element (DUE), permitting loading of DNA polymerase. After initiation quickly degrades to an ADP-DnaA complex that is not apt for DNA replication. Binds acidic phospholipids. The protein is Chromosomal replication initiator protein DnaA of Campylobacter curvus (strain 525.92).